Consider the following 419-residue polypeptide: Innexin-2 (419 aa).

The next 4 membrane-spanning stretches (helical) occupy residues 33 to 53 (AWFT…KQYF), 108 to 128 (PLVL…WNLF), 184 to 204 (INYF…MVLL), and 270 to 290 (LYIC…AGMI).

Belongs to the pannexin family.

Its subcellular location is the cell membrane. The protein resides in the cell junction. The protein localises to the gap junction. Its function is as follows. Structural component of the gap junctions. The protein is Innexin-2 (inx-2) of Caenorhabditis elegans.